A 260-amino-acid polypeptide reads, in one-letter code: 14-3-3-like protein GF14-F (260 aa).

Residues 241–260 (NAEDGGDEIKEAAKPEGEGH) form a disordered region. The span at 247–260 (DEIKEAAKPEGEGH) shows a compositional bias: basic and acidic residues.

Belongs to the 14-3-3 family. As to quaternary structure, may form a complex with the transcriptional activator VP1 and the bZIP transcription factor EMBP1. Expressed in seedlings, roots and panicles and at lower levels in flag leaves and internodes.

The protein resides in the cytoplasm. It localises to the nucleus. Is associated with a DNA binding complex that binds to the G box, a well-characterized cis-acting DNA regulatory element found in plant genes. The polypeptide is 14-3-3-like protein GF14-F (GF14F) (Oryza sativa subsp. japonica (Rice)).